The chain runs to 538 residues: MRWRRVGDVVAVALLLGAAAAAAAAAARHDYEEALRKSLLYFEAQRSGRLPHGQRVAWRDHSGLTDGLEQGVDLVGGYYDAGDHVKFGLPMAFTVTMLSWSLLEYGADVAAAGELAHALDAIKWGTDYFIKAHTKPHELWAEVGDGDTDHYCWQRPEDMTTSRQAYKVDRRRPGSDVAGETAAAMAAASIVFRQSNPHYSHLLLHHAQQLFEFADTYRGKYDSSIAEVKSYYASVSGYHDELLWAALWLHRATGRAAYLDYAVDNADEFGGTGWAITEFSWDVKYAGVQILAARLLMRGEHEERHRGTLERYREKAEHYVCACMGRNAAGGADANVERSPGGMLYVRQWNNMQYVTNAAFLLSAYSDYLAGAGDGDGDGGGGVATCVGGGGAGAGEVFAAAREQVDYVLGSNPRGMSYLVGYGERFPARVHHRAASIVPYKDSKEFIGCAQGFDDWFGRRGANPNVVVGAIVGGPDRRDRFRDDRENYMQTEACTYNTAPMVGMFAMLNRLSRQESPSTTTTTTATTSSPEMGLSVNR.

Residues 1 to 26 form the signal peptide; the sequence is MRWRRVGDVVAVALLLGAAAAAAAAA. Residue aspartate 83 is the Nucleophile of the active site. Residues histidine 431, aspartate 483, and glutamate 492 contribute to the active site. The interval 513 to 538 is disordered; it reads RQESPSTTTTTTATTSSPEMGLSVNR. Positions 516–530 are enriched in low complexity; sequence SPSTTTTTTATTSSP.

It belongs to the glycosyl hydrolase 9 (cellulase E) family.

It localises to the secreted. It carries out the reaction Endohydrolysis of (1-&gt;4)-beta-D-glucosidic linkages in cellulose, lichenin and cereal beta-D-glucans.. The chain is Endoglucanase 16 from Oryza sativa subsp. japonica (Rice).